Reading from the N-terminus, the 315-residue chain is tRNA dimethylallyltransferase (315 aa).

An ATP-binding site is contributed by 13–20 (GPTASGKT). Residue 15–20 (TASGKT) coordinates substrate. Interaction with substrate tRNA stretches follow at residues 38 to 41 (DSAL), 162 to 166 (QRIQR), and 245 to 250 (RCVGYR).

Belongs to the IPP transferase family. Monomer. The cofactor is Mg(2+).

The catalysed reaction is adenosine(37) in tRNA + dimethylallyl diphosphate = N(6)-dimethylallyladenosine(37) in tRNA + diphosphate. Catalyzes the transfer of a dimethylallyl group onto the adenine at position 37 in tRNAs that read codons beginning with uridine, leading to the formation of N6-(dimethylallyl)adenosine (i(6)A). The protein is tRNA dimethylallyltransferase of Methylobacillus flagellatus (strain ATCC 51484 / DSM 6875 / VKM B-1610 / KT).